We begin with the raw amino-acid sequence, 268 residues long: Gasdermin bGSDM (268 aa).

A lipid anchor (S-palmitoyl cysteine) is attached at cysteine 3. The next 4 beta stranded transmembrane spans lie at 78-94 (IDLRKTNSLSSAVAAKI), 103-121 (APSFDLAFENSSSVIFHIE), 168-185 (KMRMQFERKNKGELGVDV), and 195-211 (AKLESKIEGSTYDRLVF). The segment at 248–268 (GENMALNLFTEIQDAGFIEVT) is C-terminal region.

The protein belongs to the bacterial gasdermin family. Monomer in solution. In terms of assembly, forms large, homooligomeric ring-shaped pores when inserted in membranes. Post-translationally, cleavage by the adjacently encoded protease (G563DRAFT_02009) between Leu-247 and Gly-248 relieves autoinhibition, releasing the N-terminus which initiates loss of cell integrity. In terms of processing, palmitoylation helps stabilize the inactive state; may self-palmitoylate. Palmitoylation is not required for permeabilization of liposomes by the ring-like pores in vitro. Palmitoylation plays a significant role in pore formation.

It is found in the cytoplasm. The protein localises to the cell inner membrane. With respect to regulation, the full-length protein before cleavage is inactive: intramolecular interactions between the N-terminal domain and the C-terminal region, as well as the lipid modification, mediate autoinhibition. The pyroptosis-like-inducing activity is carried by the released N-terminal domain (gasdermin bGSDM, N-terminus). Functionally, precursor of a pore-forming protein involved in defense against bacteriophages. Cleavage of this precursor by its dedicated, neighboring protease (G563DRAFT_02009) releases the active moiety (gasdermin bGSDM, N-terminus) which inserts into membranes, forming pores and triggering cell death. Expression of bGSDM and its protease is highly toxic in E.coli. Cells expressing the gene pair stop dividing and lose membrane integrity. Both proteins are required to kill E.coli. In terms of biological role, pore-forming protein that causes membrane permeabilization via a pyroptosis-like activity. Makes ring-like pores with walls about 50 Angstroms thick and an interior pore diameter of 200-300 Angstroms, when integrated in liposomes. The protein is Gasdermin bGSDM of Runella zeae (strain ATCC BAA-293 / DSM 19591 / LMG 21438 / NS12).